The following is a 556-amino-acid chain: 2-succinyl-5-enolpyruvyl-6-hydroxy-3-cyclohexene-1-carboxylate synthase (556 aa).

Belongs to the TPP enzyme family. MenD subfamily. As to quaternary structure, homodimer. Requires Mg(2+) as cofactor. Mn(2+) serves as cofactor. The cofactor is thiamine diphosphate.

It catalyses the reaction isochorismate + 2-oxoglutarate + H(+) = 5-enolpyruvoyl-6-hydroxy-2-succinyl-cyclohex-3-ene-1-carboxylate + CO2. Its pathway is quinol/quinone metabolism; 1,4-dihydroxy-2-naphthoate biosynthesis; 1,4-dihydroxy-2-naphthoate from chorismate: step 2/7. It participates in quinol/quinone metabolism; menaquinone biosynthesis. Its function is as follows. Catalyzes the thiamine diphosphate-dependent decarboxylation of 2-oxoglutarate and the subsequent addition of the resulting succinic semialdehyde-thiamine pyrophosphate anion to isochorismate to yield 2-succinyl-5-enolpyruvyl-6-hydroxy-3-cyclohexene-1-carboxylate (SEPHCHC). This is 2-succinyl-5-enolpyruvyl-6-hydroxy-3-cyclohexene-1-carboxylate synthase from Salmonella agona (strain SL483).